Consider the following 441-residue polypeptide: MDKTSQLPDELLVKVLSFLPTKDAVRTSLLSMRWKSLWMWLPKLEYDFRHYSVSEGQGLARFITLSLLGHKAPAIESLSLKLRYGAIGSIKPEDIYLWVSLAVHDSNVRELSLKLCTFAERPTKLPKSLYKCKSIVILKLKDEILVDVPRKVCLPSLKTLFLGRVTYSDEDSLHRLLSNCPVLEDLVVERDRIDNLGKLSVVVKSLQRLTLKMSCPCHLDGIMMNTPSLKYLKVTDERQESDSDNESDSDSPRYFYDFEDMPKLEEADFVLTFQNIKKFFKFVTSIKRLSLCLGVYTEESLYHEGLVFNQLEQLKICSCDSDWSILLSRLLESSPNLRELEAYVIEDHPDRRVDLPNQWGNQLNCVPKCLLSSLETFKWSEMYGLLQNQMDVAKYILRNARCLKSATIFFPTTYAKETRDEMIEELSLSFQGPETCQVFFH.

The 47-residue stretch at methionine 1–aspartate 47 folds into the F-box domain. LRR repeat units follow at residues glutamine 57 to leucine 82, isoleucine 87 to leucine 115, isoleucine 137 to arginine 164, valine 165 to arginine 190, leucine 211 to aspartate 236, serine 243 to leucine 271, leucine 293 to serine 318, and cysteine 319 to valine 344. The region spanning glutamine 358–phenylalanine 410 is the FBD domain.

The chain is Putative F-box/FBD/LRR-repeat protein At4g00315 from Arabidopsis thaliana (Mouse-ear cress).